A 769-amino-acid polypeptide reads, in one-letter code: MGKKRAPQKGKTVTKPQEIIVDESKLNWKPVDIPDTLDDFGGFYGLEEIDGVDVKVVDGKVTFVTKKDSKVLKDSNKEKVGDDQESVENESGSDSESELLEFKNLDDIKEGELSAASYSSSDEDEQGNIESSKLTDPSEDVDEDVLKENVFNKDINIDDISPVNLPEWTNLAPLSMTILQSLQNLNFLRPTEIQKKSIPVIMQGVDVMGKASTGSGKTLAYGIPIVEKLISNFSQKNKKPISLIFTPTRELAHQVTDHLKKICEPVLAKSQYSILSLTGGLSIQKQQRLLKYDNSGQIVIATPGRFLELLEKDNTLIKRFSKVDTLILDEADRLLQDGHFDEFEKIIKHLLVERRKNRENSEGSSKIWQTLIFSATFSIDLFDKLSSSRQVKDRRFKNNEDELNAVIQHLMSKIHFNSKPVIIDTNPESKVSSQIKESLIECPPLERDLYCYYFLTMFPGTTLIFCNAIDSVKKLTVYLNNLGIPAFQIHSSMTQKNRLKSLERFKQQSAKQKTINHSNPDSVQLSTVLIASDVAARGLDIPGVQHVIHYHLPRSTDIYIHRSGRTARAGCEGVSAMICSPQESMGPLRKLRKTLATKNSVSTDLNSRSTNRKPIKWQNTVPLLPIETDILSQLRERSRLAGELADHEIASNSLRKDDNWLKKAADELGIDVDSDEDDISKSNSDTFLLKNKNKKMQKTINKDKVKAMRATLNELLSVPIRKDRRQKYLTGGLVNLADNLVKKRGHNSIIGHEKTNALETLKKKKKRNN.

Residues 73-82 (KDSNKEKVGD) are compositionally biased toward basic and acidic residues. 2 disordered regions span residues 73–99 (KDSN…ESEL) and 114–140 (SAAS…PSED). Positions 83-99 (DQESVENESGSDSESEL) are enriched in acidic residues. Thr135 carries the post-translational modification Phosphothreonine. Ser138 bears the Phosphoserine mark. The Q motif signature appears at 167-195 (EWTNLAPLSMTILQSLQNLNFLRPTEIQK). The Helicase ATP-binding domain maps to 198 to 395 (IPVIMQGVDV…SSSRQVKDRR (198 aa)). 211–218 (ASTGSGKT) is an ATP binding site. The DEAD box signature appears at 329-332 (DEAD). Residues 448-611 (DLYCYYFLTM…STDLNSRSTN (164 aa)) form the Helicase C-terminal domain. Position 674 is a phosphoserine (Ser674).

This sequence belongs to the DEAD box helicase family. DDX24/MAK5 subfamily.

It localises to the nucleus. The protein resides in the nucleolus. It catalyses the reaction ATP + H2O = ADP + phosphate + H(+). Functionally, ATP-binding RNA helicase involved in the biogenesis of 60S ribosomal subunits and is required for the normal formation of 25S and 5.8S rRNAs. The chain is ATP-dependent RNA helicase MAK5 (MAK5) from Saccharomyces cerevisiae (strain YJM789) (Baker's yeast).